We begin with the raw amino-acid sequence, 278 residues long: Large ribosomal subunit protein uL2 (278 aa).

2 disordered regions span residues lysine 28–glycine 56 and arginine 221–arginine 278. Residues isoleucine 269–arginine 278 are compositionally biased toward basic residues.

This sequence belongs to the universal ribosomal protein uL2 family. As to quaternary structure, part of the 50S ribosomal subunit. Forms a bridge to the 30S subunit in the 70S ribosome.

One of the primary rRNA binding proteins. Required for association of the 30S and 50S subunits to form the 70S ribosome, for tRNA binding and peptide bond formation. It has been suggested to have peptidyltransferase activity; this is somewhat controversial. Makes several contacts with the 16S rRNA in the 70S ribosome. This Rhizorhabdus wittichii (strain DSM 6014 / CCUG 31198 / JCM 15750 / NBRC 105917 / EY 4224 / RW1) (Sphingomonas wittichii) protein is Large ribosomal subunit protein uL2.